The chain runs to 152 residues: Alpha-amylase inhibitor BDAI-1 (152 aa).

Residues 1–30 (MGAMWMKSMLLVLLLCMLMVTPMTGARSDN) form the signal peptide.

Belongs to the protease inhibitor I6 (cereal trypsin/alpha-amylase inhibitor) family. In terms of assembly, homodimer. Post-translationally, five disulfide bonds, which are essential for the inhibitor activity, are probably present. Endosperm.

It localises to the secreted. In terms of biological role, could be involved in insect defense mechanisms. Inhibits insect-type alpha-amylase. In Hordeum vulgare (Barley), this protein is Alpha-amylase inhibitor BDAI-1 (IAD1).